Here is a 631-residue protein sequence, read N- to C-terminus: tRNA uridine 5-carboxymethylaminomethyl modification enzyme MnmG (631 aa).

Residues 15–20 (GAGHAG), I127, and S182 each bind FAD. 276–290 (GPRYCPSIEDKIVRF) provides a ligand contact to NAD(+). Q373 contacts FAD.

The protein belongs to the MnmG family. In terms of assembly, homodimer. Heterotetramer of two MnmE and two MnmG subunits. Requires FAD as cofactor.

It localises to the cytoplasm. Its function is as follows. NAD-binding protein involved in the addition of a carboxymethylaminomethyl (cmnm) group at the wobble position (U34) of certain tRNAs, forming tRNA-cmnm(5)s(2)U34. The sequence is that of tRNA uridine 5-carboxymethylaminomethyl modification enzyme MnmG from Streptococcus mutans serotype c (strain ATCC 700610 / UA159).